The sequence spans 81 residues: Type III secretion regulatory protein ExsE (81 aa).

Residues 55–81 form a disordered region; that stretch reads DPRSEQALQRLADGDGTPLEARTVRRR.

In terms of assembly, interacts with ExsC.

The protein resides in the cytoplasm. It localises to the secreted. Acts as a negative regulator of the type III secretion regulon (T3SS) expression. In the absence of inducing signals such as low Ca(2+) or host cell contact, the T3SS/injectisome is expressed at a low basal level and exists in a quiescent state due to ExsA sequestration by ExsD. ExsE binding to ExsC disrupts the complex between ExsC and ExsD, thereby allowing free ExsD to bind ExsA. Upon inducing signal, ExsE is secreted allowing ExsC to bind ExsD. In turn, ExsD cannot bind ExsA and prevent ExsA-mediated transcriptional activation of the type III secretion system. The protein is Type III secretion regulatory protein ExsE (exsE) of Pseudomonas aeruginosa (strain ATCC 15692 / DSM 22644 / CIP 104116 / JCM 14847 / LMG 12228 / 1C / PRS 101 / PAO1).